Reading from the N-terminus, the 465-residue chain is L-seryl-tRNA(Sec) selenium transferase (465 aa).

An N6-(pyridoxal phosphate)lysine modification is found at K294.

Belongs to the SelA family. Pyridoxal 5'-phosphate is required as a cofactor.

The protein localises to the cytoplasm. It catalyses the reaction L-seryl-tRNA(Sec) + selenophosphate + H(+) = L-selenocysteinyl-tRNA(Sec) + phosphate. The protein operates within aminoacyl-tRNA biosynthesis; selenocysteinyl-tRNA(Sec) biosynthesis; selenocysteinyl-tRNA(Sec) from L-seryl-tRNA(Sec) (bacterial route): step 1/1. In terms of biological role, converts seryl-tRNA(Sec) to selenocysteinyl-tRNA(Sec) required for selenoprotein biosynthesis. The chain is L-seryl-tRNA(Sec) selenium transferase from Mannheimia succiniciproducens (strain KCTC 0769BP / MBEL55E).